An 82-amino-acid chain; its full sequence is Turripeptide OL139 (82 aa).

A disordered region spans residues 58–82; it reads HRTTRDTADKTHGGSQRDRFFQSIA.

Contains 6 disulfide bonds. As to expression, expressed by the venom duct.

It localises to the secreted. Its function is as follows. Acts as a neurotoxin by inhibiting an ion channel. The chain is Turripeptide OL139 from Iotyrris olangoensis (Sea snail).